The primary structure comprises 185 residues: ATP synthase subunit delta, chloroplastic (185 aa).

Belongs to the ATPase delta chain family. In terms of assembly, F-type ATPases have 2 components, F(1) - the catalytic core - and F(0) - the membrane proton channel. F(1) has five subunits: alpha(3), beta(3), gamma(1), delta(1), epsilon(1). CF(0) has four main subunits: a(1), b(1), b'(1) and c(10-14). The alpha and beta chains form an alternating ring which encloses part of the gamma chain. F(1) is attached to F(0) by a central stalk formed by the gamma and epsilon chains, while a peripheral stalk is formed by the delta, b and b' chains.

Its subcellular location is the plastid. It is found in the chloroplast thylakoid membrane. In terms of biological role, f(1)F(0) ATP synthase produces ATP from ADP in the presence of a proton or sodium gradient. F-type ATPases consist of two structural domains, F(1) containing the extramembraneous catalytic core and F(0) containing the membrane proton channel, linked together by a central stalk and a peripheral stalk. During catalysis, ATP synthesis in the catalytic domain of F(1) is coupled via a rotary mechanism of the central stalk subunits to proton translocation. Functionally, this protein is part of the stalk that links CF(0) to CF(1). It either transmits conformational changes from CF(0) to CF(1) or is implicated in proton conduction. This Guillardia theta (Cryptophyte) protein is ATP synthase subunit delta, chloroplastic.